We begin with the raw amino-acid sequence, 254 residues long: Triosephosphate isomerase, cytosolic (254 aa).

Residues Asn10 and Lys12 each coordinate substrate. Residue His96 is the Electrophile of the active site. The active-site Proton acceptor is the Glu166.

The protein belongs to the triosephosphate isomerase family. As to quaternary structure, homodimer.

The protein resides in the cytoplasm. It carries out the reaction D-glyceraldehyde 3-phosphate = dihydroxyacetone phosphate. The protein operates within carbohydrate biosynthesis; gluconeogenesis. It functions in the pathway carbohydrate degradation; glycolysis; D-glyceraldehyde 3-phosphate from glycerone phosphate: step 1/1. This Petunia hybrida (Petunia) protein is Triosephosphate isomerase, cytosolic (TPIP1).